A 207-amino-acid polypeptide reads, in one-letter code: Large ribosomal subunit protein uL4 (207 aa).

The disordered stretch occupies residues 56–77; it reads FVSGGGKKPWRQKGTGRARHGS. Basic residues predominate over residues 63 to 77; the sequence is KPWRQKGTGRARHGS.

It belongs to the universal ribosomal protein uL4 family. As to quaternary structure, part of the 50S ribosomal subunit.

Functionally, one of the primary rRNA binding proteins, this protein initially binds near the 5'-end of the 23S rRNA. It is important during the early stages of 50S assembly. It makes multiple contacts with different domains of the 23S rRNA in the assembled 50S subunit and ribosome. Forms part of the polypeptide exit tunnel. The protein is Large ribosomal subunit protein uL4 of Phytoplasma australiense.